The primary structure comprises 408 residues: Glutamate N-acetyltransferase (408 aa).

Substrate is bound by residues T150, K176, T189, E271, N403, and T408. The Nucleophile role is filled by T189.

This sequence belongs to the ArgJ family. Heterotetramer of two alpha and two beta chains.

Its subcellular location is the cytoplasm. The catalysed reaction is N(2)-acetyl-L-ornithine + L-glutamate = N-acetyl-L-glutamate + L-ornithine. Its pathway is amino-acid biosynthesis; L-arginine biosynthesis; L-ornithine and N-acetyl-L-glutamate from L-glutamate and N(2)-acetyl-L-ornithine (cyclic): step 1/1. Functionally, catalyzes the transfer of the acetyl group from N(2)-acetylornithine to glutamate, forming N-acetylglutamate and L-ornithine. The sequence is that of Glutamate N-acetyltransferase from Methanococcus maripaludis (strain C6 / ATCC BAA-1332).